The chain runs to 191 residues: Orotate phosphoribosyltransferase (191 aa).

Position 116–124 (116–124) interacts with 5-phospho-alpha-D-ribose 1-diphosphate; it reads EDVVTTGGS. Orotate is bound by residues Thr120 and Arg148.

This sequence belongs to the purine/pyrimidine phosphoribosyltransferase family. PyrE subfamily. As to quaternary structure, homodimer. Mg(2+) serves as cofactor.

The catalysed reaction is orotidine 5'-phosphate + diphosphate = orotate + 5-phospho-alpha-D-ribose 1-diphosphate. The protein operates within pyrimidine metabolism; UMP biosynthesis via de novo pathway; UMP from orotate: step 1/2. In terms of biological role, catalyzes the transfer of a ribosyl phosphate group from 5-phosphoribose 1-diphosphate to orotate, leading to the formation of orotidine monophosphate (OMP). The chain is Orotate phosphoribosyltransferase from Heliobacterium modesticaldum (strain ATCC 51547 / Ice1).